Consider the following 629-residue polypeptide: MLLSELSHPNQLHGLTVSQLEEIACQIRERHLQVVSTSGGHLGPGLGVVELTLALYQTLDLDFDKVVWDVGHQGYPHKLITGRFSQFDSLRQQNGVAGYLKRSESKFDHFGAGHASTSISAALGMAIARDRKGENYKCVAVIGDGALTGGMALEAINHAGHLPNTPLVVVLNDNDMSISPPVGALSSYLNKVRVSPPLQFLSDSVQESVKNIPLIGKDIPEELKNIKGSVRRLSVPKVGAVFEELGFTYMGPIEGHDIANLIKTFNAAHKLKRPVLVHVVTTKGKGYPYAEADQVGYHAQSAFDLTTGKSIPSKKPKPVSYSKIFGQTLLKICEQDSKVIGITAAMATGTGLDILQKNIPDQYIDVGIAEQHAVTLAAGMSCDGLKPVVAIYSTFLQRAFDQLIHDVGIQNLPVSFVLDRAGIVGADGPTHQGQYDISYMRSIPNFVLMAPKDESELQRMLITSINHNGPTALRIPRGSGLGVAVMDEGWEPMNIGEAEILEEGEDILIIAYGSMVASAIETAKILKNMNINACIVNARFVKPLDKNLIMPLASRIQKVVTMEEGTLIGGFGSAIVELFNDNEINIPVYRIGIPDVLVDHASPDQSKEKLGLLPDQMADKIIKKFKLVI.

Thiamine diphosphate is bound by residues histidine 72 and 113 to 115 (GHA). Residue aspartate 144 coordinates Mg(2+). Residues 145 to 146 (GA), asparagine 174, tyrosine 287, and glutamate 370 contribute to the thiamine diphosphate site. Asparagine 174 serves as a coordination point for Mg(2+).

Belongs to the transketolase family. DXPS subfamily. In terms of assembly, homodimer. Mg(2+) serves as cofactor. Thiamine diphosphate is required as a cofactor.

It carries out the reaction D-glyceraldehyde 3-phosphate + pyruvate + H(+) = 1-deoxy-D-xylulose 5-phosphate + CO2. The protein operates within metabolic intermediate biosynthesis; 1-deoxy-D-xylulose 5-phosphate biosynthesis; 1-deoxy-D-xylulose 5-phosphate from D-glyceraldehyde 3-phosphate and pyruvate: step 1/1. In terms of biological role, catalyzes the acyloin condensation reaction between C atoms 2 and 3 of pyruvate and glyceraldehyde 3-phosphate to yield 1-deoxy-D-xylulose-5-phosphate (DXP). The protein is 1-deoxy-D-xylulose-5-phosphate synthase of Prochlorococcus marinus (strain AS9601).